Consider the following 423-residue polypeptide: Pleckstrin homology domain-containing family O member 1 (423 aa).

Disordered regions lie at residues 1 to 21 (MEKNNSAKRGQQDGNQQSAQP), 81 to 100 (RKSKSRSKKNHSKFTLAHSR), and 217 to 277 (LAAG…HSEK). Polar residues predominate over residues 7–20 (AKRGQQDGNQQSAQ). One can recognise a PH domain in the interval 20–131 (QPEKVGWVRK…WINALNSAIT (112 aa)). Basic residues predominate over residues 83–92 (SKSRSKKNHS). The segment covering 222 to 259 (RRSDSENVKLSEKGRSGTLPRHEVTSWDKPTQRKDSLD) has biased composition (basic and acidic residues).

In terms of processing, C-terminal fragments could be released during apoptosis via caspase-3-dependent cleavage.

The protein resides in the membrane. It is found in the nucleus. The protein localises to the cytoplasm. Functionally, plays a role in the regulation of the actin cytoskeleton through its interactions with actin capping protein (CP). This chain is Pleckstrin homology domain-containing family O member 1 (PLEKHO1), found in Gallus gallus (Chicken).